We begin with the raw amino-acid sequence, 341 residues long: Ketol-acid reductoisomerase (NADP(+)) (341 aa).

Residues 2-181 enclose the KARI N-terminal Rossmann domain; that stretch reads AKVYYNGDAN…GAARAGVLET (180 aa). NADP(+)-binding positions include 25 to 28, Arg48, Ser52, and 82 to 85; these read YGSQ and DEKQ. His107 is an active-site residue. Residue Gly133 coordinates NADP(+). A KARI C-terminal knotted domain is found at 182-327; sequence TFKEETETDL…RELRSMMPFV (146 aa). Residues Asp190, Glu194, Glu226, and Glu230 each contribute to the Mg(2+) site. Ser251 provides a ligand contact to substrate.

It belongs to the ketol-acid reductoisomerase family. Mg(2+) serves as cofactor.

The catalysed reaction is (2R)-2,3-dihydroxy-3-methylbutanoate + NADP(+) = (2S)-2-acetolactate + NADPH + H(+). It carries out the reaction (2R,3R)-2,3-dihydroxy-3-methylpentanoate + NADP(+) = (S)-2-ethyl-2-hydroxy-3-oxobutanoate + NADPH + H(+). It functions in the pathway amino-acid biosynthesis; L-isoleucine biosynthesis; L-isoleucine from 2-oxobutanoate: step 2/4. The protein operates within amino-acid biosynthesis; L-valine biosynthesis; L-valine from pyruvate: step 2/4. Its function is as follows. Involved in the biosynthesis of branched-chain amino acids (BCAA). Catalyzes an alkyl-migration followed by a ketol-acid reduction of (S)-2-acetolactate (S2AL) to yield (R)-2,3-dihydroxy-isovalerate. In the isomerase reaction, S2AL is rearranged via a Mg-dependent methyl migration to produce 3-hydroxy-3-methyl-2-ketobutyrate (HMKB). In the reductase reaction, this 2-ketoacid undergoes a metal-dependent reduction by NADPH to yield (R)-2,3-dihydroxy-isovalerate. The protein is Ketol-acid reductoisomerase (NADP(+)) of Geobacillus kaustophilus (strain HTA426).